A 372-amino-acid polypeptide reads, in one-letter code: tRNA-specific 2-thiouridylase MnmA (372 aa).

ATP contacts are provided by residues 9–16 (GMSGGVDS) and methionine 35. The interval 95 to 97 (NPD) is interaction with target base in tRNA. Cysteine 100 functions as the Nucleophile in the catalytic mechanism. A disulfide bridge links cysteine 100 with cysteine 201. Glycine 124 lines the ATP pocket. The interval 151 to 153 (KDQ) is interaction with tRNA. Cysteine 201 functions as the Cysteine persulfide intermediate in the catalytic mechanism. An interaction with tRNA region spans residues 317–318 (RY).

Belongs to the MnmA/TRMU family.

It is found in the cytoplasm. It carries out the reaction S-sulfanyl-L-cysteinyl-[protein] + uridine(34) in tRNA + AH2 + ATP = 2-thiouridine(34) in tRNA + L-cysteinyl-[protein] + A + AMP + diphosphate + H(+). Functionally, catalyzes the 2-thiolation of uridine at the wobble position (U34) of tRNA, leading to the formation of s(2)U34. The chain is tRNA-specific 2-thiouridylase MnmA from Herminiimonas arsenicoxydans.